Consider the following 148-residue polypeptide: SsrA-binding protein (148 aa).

The protein belongs to the SmpB family.

The protein localises to the cytoplasm. Functionally, required for rescue of stalled ribosomes mediated by trans-translation. Binds to transfer-messenger RNA (tmRNA), required for stable association of tmRNA with ribosomes. tmRNA and SmpB together mimic tRNA shape, replacing the anticodon stem-loop with SmpB. tmRNA is encoded by the ssrA gene; the 2 termini fold to resemble tRNA(Ala) and it encodes a 'tag peptide', a short internal open reading frame. During trans-translation Ala-aminoacylated tmRNA acts like a tRNA, entering the A-site of stalled ribosomes, displacing the stalled mRNA. The ribosome then switches to translate the ORF on the tmRNA; the nascent peptide is terminated with the 'tag peptide' encoded by the tmRNA and targeted for degradation. The ribosome is freed to recommence translation, which seems to be the essential function of trans-translation. The chain is SsrA-binding protein from Ehrlichia canis (strain Jake).